The chain runs to 108 residues: Protein YcgL (108 aa).

In terms of domain architecture, YcgL spans 12–96 (MFCVIYRSSK…PPEDLLKQHL (85 aa)).

The sequence is that of Protein YcgL from Escherichia coli (strain K12 / MC4100 / BW2952).